The following is an 858-amino-acid chain: Magnesium transporter ALR2 (858 aa).

Residues Met-1–Leu-14 are compositionally biased toward low complexity. Disordered stretches follow at residues Met-1 to Tyr-81, Thr-318 to Ser-337, and Asn-365 to Asp-396. Over Met-1 to Lys-741 the chain is Cytoplasmic. Positions Pro-46–Asp-61 are enriched in basic and acidic residues. Residues Ser-67–Tyr-81 are compositionally biased toward low complexity. Basic and acidic residues-rich tracts occupy residues Glu-367–Pro-379 and Asn-386–Asn-395. A helical transmembrane segment spans residues Val-742–Asn-762. The Extracellular portion of the chain corresponds to Val-763–Ser-771. A helical transmembrane segment spans residues Ile-772 to Leu-792. Over Ala-793–Asn-858 the chain is Cytoplasmic.

This sequence belongs to the CorA metal ion transporter (MIT) (TC 1.A.35) family.

The protein resides in the cell membrane. Functionally, plasma membrane magnesium transporter. The protein is Magnesium transporter ALR2 (ALR2) of Saccharomyces cerevisiae (strain ATCC 204508 / S288c) (Baker's yeast).